We begin with the raw amino-acid sequence, 87 residues long: DNA-directed RNA polymerase subunit omega (87 aa).

The protein belongs to the RNA polymerase subunit omega family. The RNAP catalytic core consists of 2 alpha, 1 beta, 1 beta' and 1 omega subunit. When a sigma factor is associated with the core the holoenzyme is formed, which can initiate transcription.

The enzyme catalyses RNA(n) + a ribonucleoside 5'-triphosphate = RNA(n+1) + diphosphate. Functionally, promotes RNA polymerase assembly. Latches the N- and C-terminal regions of the beta' subunit thereby facilitating its interaction with the beta and alpha subunits. This Ectopseudomonas mendocina (strain ymp) (Pseudomonas mendocina) protein is DNA-directed RNA polymerase subunit omega.